Here is a 95-residue protein sequence, read N- to C-terminus: Cell division topological specificity factor (95 aa).

This sequence belongs to the MinE family.

Prevents the cell division inhibition by proteins MinC and MinD at internal division sites while permitting inhibition at polar sites. This ensures cell division at the proper site by restricting the formation of a division septum at the midpoint of the long axis of the cell. The sequence is that of Cell division topological specificity factor from Trichodesmium erythraeum (strain IMS101).